Here is a 348-residue protein sequence, read N- to C-terminus: Aldose 1-epimerase (348 aa).

R80 serves as a coordination point for substrate. H180 functions as the Proton donor in the catalytic mechanism. D243 provides a ligand contact to substrate. The active-site Proton acceptor is E311.

This sequence belongs to the aldose epimerase family.

It carries out the reaction alpha-D-glucose = beta-D-glucose. It functions in the pathway carbohydrate metabolism; hexose metabolism. Its function is as follows. Mutarotase converts alpha-aldose to the beta-anomer. It is active on D-glucose, L-arabinose, D-xylose, D-galactose, maltose and lactose. In Streptococcus thermophilus, this protein is Aldose 1-epimerase (galM).